The chain runs to 637 residues: MSNWSINDARTGYNVNYWSQGLYGISDEGEATVSPDPTRPECSIGLNELAKDMVKSGVNLPVLVRFPQILHHRVNSLCQAFNQAIQKYQYQADYLLVYPIKVNQQQTVVEEILASQVEKEVPQLGLEAGSKPELMAVLAMAQKASSVIICNGYKDIEYIRLALIGEKLGHKVYIVLEKLSELKTVLEESKKLGVTPRLGLRVRLAFQGKGKWQASGGEKSKFGLSASQVLTVIESLKSEEMLDSLQLLHFHLGSQIANIRDIRQGVSEAGRFYCELQKLGANVKCFDVGGGLAVDYDGTRSQSSSSMNYGLTEYANNIVSVLTDICNEYEQPMPRIISESGCYLTAHHAVLITDVIGTEAYKPEDIQPPAEDAPQLLHNMWHSWNEISGRADQRALIEIYHDCQSDLTEVHSLFALGQLSLTDRAWAEQVNLRVCHELQGVMSSKYRFHRPIIDELTEKLADKFFVNFSLFQSLPDAWGIDQVFPIMPLSGLDKAPERRAVMLDITCDSDGTIDQYVDGQGIETTLPVPAWSAESPYLIGFFLVGAYQEILGDMHNLFGDTNSAVIRLDDDGRTNIESVLAGDTVADVLRYVNLDAVSFMRTYEELVNKHIQEDERANILEELQLGLKGYTYLEDFS.

An N6-(pyridoxal phosphate)lysine modification is found at Lys-101. 286-296 (FDVGGGLAVDY) provides a ligand contact to substrate.

This sequence belongs to the Orn/Lys/Arg decarboxylase class-II family. SpeA subfamily. Mg(2+) serves as cofactor. Requires pyridoxal 5'-phosphate as cofactor.

The catalysed reaction is L-arginine + H(+) = agmatine + CO2. The protein operates within amine and polyamine biosynthesis; agmatine biosynthesis; agmatine from L-arginine: step 1/1. Catalyzes the biosynthesis of agmatine from arginine. In Shewanella woodyi (strain ATCC 51908 / MS32), this protein is Biosynthetic arginine decarboxylase.